Consider the following 210-residue polypeptide: Holliday junction branch migration complex subunit RuvA (210 aa).

The tract at residues 1 to 70 (MISYLKGNPI…DEQPILYGFA (70 aa)) is domain I. The segment at 71–149 (TAAERELFRQ…QWRKLVGITL (79 aa)) is domain II. Residues 150 to 160 (PSTSAIPSLEV) are flexible linker. The domain III stretch occupies residues 160–210 (VLEDVEMTLLALGYTNEEINKAISTLSQDNQMLKNTNSEEWIREAIAWLSQ).

The protein belongs to the RuvA family. Homotetramer. Forms an RuvA(8)-RuvB(12)-Holliday junction (HJ) complex. HJ DNA is sandwiched between 2 RuvA tetramers; dsDNA enters through RuvA and exits via RuvB. An RuvB hexamer assembles on each DNA strand where it exits the tetramer. Each RuvB hexamer is contacted by two RuvA subunits (via domain III) on 2 adjacent RuvB subunits; this complex drives branch migration. In the full resolvosome a probable DNA-RuvA(4)-RuvB(12)-RuvC(2) complex forms which resolves the HJ.

It localises to the cytoplasm. The RuvA-RuvB-RuvC complex processes Holliday junction (HJ) DNA during genetic recombination and DNA repair, while the RuvA-RuvB complex plays an important role in the rescue of blocked DNA replication forks via replication fork reversal (RFR). RuvA specifically binds to HJ cruciform DNA, conferring on it an open structure. The RuvB hexamer acts as an ATP-dependent pump, pulling dsDNA into and through the RuvAB complex. HJ branch migration allows RuvC to scan DNA until it finds its consensus sequence, where it cleaves and resolves the cruciform DNA. The polypeptide is Holliday junction branch migration complex subunit RuvA (Rippkaea orientalis (strain PCC 8801 / RF-1) (Cyanothece sp. (strain PCC 8801))).